Here is an 88-residue protein sequence, read N- to C-terminus: Small ribosomal subunit protein bS20 (88 aa).

Residues 1-27 are disordered; sequence MANTKQAQKRARQAEQRRQHNASQRSM.

This sequence belongs to the bacterial ribosomal protein bS20 family.

Functionally, binds directly to 16S ribosomal RNA. In Chromohalobacter salexigens (strain ATCC BAA-138 / DSM 3043 / CIP 106854 / NCIMB 13768 / 1H11), this protein is Small ribosomal subunit protein bS20.